A 291-amino-acid polypeptide reads, in one-letter code: Diaminopimelate epimerase (291 aa).

Positions 17, 50, and 70 each coordinate substrate. C79 acts as the Proton donor in catalysis. Substrate is bound by residues 80–81, N167, N200, and 218–219; these read GN and ER. C227 serves as the catalytic Proton acceptor. 228-229 contributes to the substrate binding site; sequence GS.

It belongs to the diaminopimelate epimerase family. As to quaternary structure, homodimer.

It is found in the cytoplasm. The catalysed reaction is (2S,6S)-2,6-diaminopimelate = meso-2,6-diaminopimelate. The protein operates within amino-acid biosynthesis; L-lysine biosynthesis via DAP pathway; DL-2,6-diaminopimelate from LL-2,6-diaminopimelate: step 1/1. Its function is as follows. Catalyzes the stereoinversion of LL-2,6-diaminopimelate (L,L-DAP) to meso-diaminopimelate (meso-DAP), a precursor of L-lysine and an essential component of the bacterial peptidoglycan. The sequence is that of Diaminopimelate epimerase from Bradyrhizobium diazoefficiens (strain JCM 10833 / BCRC 13528 / IAM 13628 / NBRC 14792 / USDA 110).